Consider the following 87-residue polypeptide: Small ribosomal subunit protein uS15c (87 aa).

It belongs to the universal ribosomal protein uS15 family. As to quaternary structure, part of the 30S ribosomal subunit.

It is found in the plastid. Its subcellular location is the chloroplast. The sequence is that of Small ribosomal subunit protein uS15c (rps15) from Amborella trichopoda.